A 161-amino-acid chain; its full sequence is Protein-export protein SecB (161 aa).

The protein belongs to the SecB family. As to quaternary structure, homotetramer, a dimer of dimers. One homotetramer interacts with 1 SecA dimer.

The protein resides in the cytoplasm. Functionally, one of the proteins required for the normal export of preproteins out of the cell cytoplasm. It is a molecular chaperone that binds to a subset of precursor proteins, maintaining them in a translocation-competent state. It also specifically binds to its receptor SecA. In Shewanella baltica (strain OS223), this protein is Protein-export protein SecB.